The sequence spans 106 residues: UPF0060 membrane protein Mrad2831_0929 (106 aa).

The next 4 helical transmembrane spans lie at 3–23, 30–50, 59–79, and 87–104; these read LLAYAAAALAEIAGCFAFWAW, AWWTLPGLASLAAFAALLTLV, FAAYGGVYVAASVLWLWLAEG, and LAGSAVCLAGTALILLGR.

Belongs to the UPF0060 family.

The protein localises to the cell inner membrane. The polypeptide is UPF0060 membrane protein Mrad2831_0929 (Methylobacterium radiotolerans (strain ATCC 27329 / DSM 1819 / JCM 2831 / NBRC 15690 / NCIMB 10815 / 0-1)).